The primary structure comprises 301 residues: GTPase Era (301 aa).

The 170-residue stretch at 4–173 (KAGFVALIGK…LECISKHLIP (170 aa)) folds into the Era-type G domain. Residues 12 to 19 (GKPNAGKS) form a G1 region. Residue 12-19 (GKPNAGKS) coordinates GTP. The interval 38–42 (NATRK) is G2. The interval 64 to 67 (DTPG) is G3. Residues 64 to 68 (DTPGL) and 122 to 125 (SKID) each bind GTP. Residues 122-125 (SKID) are G4. Residues 152–154 (LSA) form a G5 region. In terms of domain architecture, KH type-2 spans 204 to 280 (LSDEIPYESD…FLNLQVIAQK (77 aa)).

It belongs to the TRAFAC class TrmE-Era-EngA-EngB-Septin-like GTPase superfamily. Era GTPase family. Monomer.

It localises to the cytoplasm. It is found in the cell inner membrane. Its function is as follows. An essential GTPase that binds both GDP and GTP, with rapid nucleotide exchange. Plays a role in 16S rRNA processing and 30S ribosomal subunit biogenesis and possibly also in cell cycle regulation and energy metabolism. The sequence is that of GTPase Era from Helicobacter pylori (strain HPAG1).